The following is a 325-amino-acid chain: Aldo-keto reductase family 1 member A1 (325 aa).

Threonine 2 carries the N-acetylthreonine modification. Serine 4 bears the Phosphoserine mark. NADP(+)-binding positions include glycine 11–glycine 20, threonine 21, and tryptophan 22. Lysine 23 carries an N-linked (Glc) (glycation) lysine glycan. A Phosphoserine modification is found at serine 38. Residue aspartate 45 coordinates NADP(+). Tyrosine 50 acts as the Proton donor in catalysis. N-linked (Glc) (glycation) lysine glycosylation is found at lysine 68 and lysine 85. The residue at position 127 (lysine 127) is an N6-acetyllysine; alternate. Residue lysine 127 is modified to N6-succinyllysine; alternate. An N-linked (Glc) (glycation) lysine glycan is attached at lysine 141. At lysine 145 the chain carries N6-succinyllysine. An N-linked (Glc) (glycation) lysine glycan is attached at lysine 153. Residues serine 162, asparagine 163, serine 211, leucine 213, serine 215, serine 216, lysine 263, serine 264, isoleucine 265, threonine 266, arginine 269, glutamine 272, and asparagine 273 each contribute to the NADP(+) site. Serine 211 is subject to Phosphoserine.

Belongs to the aldo/keto reductase family. In terms of assembly, monomer. As to expression, widely expressed.

The protein localises to the cytoplasm. It localises to the cytosol. It is found in the apical cell membrane. It catalyses the reaction a primary alcohol + NADP(+) = an aldehyde + NADPH + H(+). The enzyme catalyses L-gulonate + NADP(+) = aldehydo-D-glucuronate + NADPH + H(+). The catalysed reaction is L-gulono-1,4-lactone + NADP(+) = D-glucurono-3,6-lactone + NADPH + H(+). It carries out the reaction allyl alcohol + NADP(+) = acrolein + NADPH + H(+). It catalyses the reaction glycerol + NADP(+) = D-glyceraldehyde + NADPH + H(+). The enzyme catalyses glycerol + NADP(+) = L-glyceraldehyde + NADPH + H(+). The catalysed reaction is hydroxyacetone + NADP(+) = methylglyoxal + NADPH + H(+). It carries out the reaction 3-deoxyfructose + NADP(+) = 3-deoxyglucosone + NADPH + H(+). It catalyses the reaction (R)-mevalonate + NADP(+) = (R)-mevaldate + NADPH + H(+). The enzyme catalyses pyridine 3-methanol + NADP(+) = pyridine-3-carbaldehyde + NADPH + H(+). The catalysed reaction is S-nitroso-CoA + NADPH + H(+) = sulfinamide-CoA + NADP(+). It carries out the reaction S-nitrosoglutathione + NADPH + H(+) = S-(hydroxysulfenamide)glutathione + NADP(+). In terms of biological role, catalyzes the NADPH-dependent reduction of a wide variety of carbonyl-containing compounds to their corresponding alcohols. Displays enzymatic activity towards endogenous metabolites such as aromatic and aliphatic aldehydes, ketones, monosaccharides and bile acids. Plays an important role in ascorbic acid biosynthesis by catalyzing the reduction of D-glucuronic acid and D-glucurono-gamma-lactone. Functions as a detoxifiying enzyme by reducing a range of toxic aldehydes. Reduces methylglyoxal and 3-deoxyglucosone, which are present at elevated levels under hyperglycemic conditions and are cytotoxic. Involved also in the detoxification of lipid-derived aldehydes like acrolein. Plays a role in the activation of procarcinogens, such as polycyclic aromatic hydrocarbon trans-dihydrodiols, and in the metabolism of various xenobiotics and drugs. Also acts as an inhibitor of protein S-nitrosylation by mediating degradation of S-nitroso-coenzyme A (S-nitroso-CoA), a cofactor required to S-nitrosylate proteins. S-nitroso-CoA reductase activity is involved in reprogramming intermediary metabolism in renal proximal tubules, notably by inhibiting protein S-nitrosylation of isoform 2 of PKM (PKM2). Also acts as a S-nitroso-glutathione reductase by catalyzing the NADPH-dependent reduction of S-nitrosoglutathione. Displays no reductase activity towards retinoids. The sequence is that of Aldo-keto reductase family 1 member A1 (Akr1a1) from Rattus norvegicus (Rat).